Consider the following 3658-residue polypeptide: Serine/threonine-protein kinase SMG1 (3658 aa).

Disordered stretches follow at residues 1–99 (MSRR…TYGR) and 116–142 (FTSV…MSYS). Residues 24-33 (NDWQPRTDSA) are compositionally biased toward polar residues. Composition is skewed to basic and acidic residues over residues 67–84 (QRHD…DEKG) and 127–136 (ATKDMRKSQE). Residue lysine 171 is modified to N6-acetyllysine. One can recognise an FAT domain in the interval 1281-1864 (RELQKSIEVQ…LYPAIVGTIS (584 aa)). An HEAT repeat occupies 1815-1850 (APWRGIIPQLFSRLNHPEVYVRQSICNLLCRVAQDS). Residues 1896 to 1917 (ECEGGSPPASQDSNKDEPKSGL) are disordered. The PI3K/PI4K catalytic domain maps to 2122–2461 (VGGTITILPT…MEREITRSLF (340 aa)). The interval 2128–2134 (ILPTKTK) is G-loop. Residues 2330–2338 (GLGDRHLDN) are catalytic loop. The interval 2350–2374 (HIDYNVCFEKGKSLRVPEKVPFRMT) is activation loop. Threonine 3547 is modified (phosphothreonine). Phosphoserine is present on residues serine 3553 and serine 3567. The span at 3565-3576 (ATSADTPPSTIP) shows a compositional bias: polar residues. Residues 3565 to 3588 (ATSADTPPSTIPGTGKSIACSPKK) are disordered. Residues threonine 3570 and threonine 3574 each carry the phosphothreonine modification. Residues 3626-3658 (RRMSVAEQVDYVIKEATNLDNLAQLYEGWTAWV) form the FATC domain.

Belongs to the PI3/PI4-kinase family. As to quaternary structure, component of the SMG1C complex composed of SMG1, SMG8 and SMG9; the recruitment of SMG8 to SMG1 N-terminus induces a large conformational change in the SMG1 C-terminal head domain containing the catalytic domain. Component of the transient SURF (SMG1-UPF1-eRF1-eRF3) complex. Part of a complex composed of SMG1, DHX34 and UPF1; within the complex DHX34 acts as a scaffolding protein to facilitate SMG1 phosphorylation of UPF1. Interacts with PRKCI. Interacts with TELO2 and TTI1. Interacts with RUVBL1 and RUVBL2. Interacts with DHX34 (via C-terminus); the interaction is RNA-independent. It depends on Mn(2+) as a cofactor. Autophosphorylated.

Its subcellular location is the nucleus. It localises to the cytoplasm. The catalysed reaction is L-seryl-[protein] + ATP = O-phospho-L-seryl-[protein] + ADP + H(+). It carries out the reaction L-threonyl-[protein] + ATP = O-phospho-L-threonyl-[protein] + ADP + H(+). Inhibited by caffeine, LY294002 and wortmannin. Serine/threonine protein kinase involved in both mRNA surveillance and genotoxic stress response pathways. Recognizes the substrate consensus sequence [ST]-Q. Plays a central role in nonsense-mediated decay (NMD) of mRNAs containing premature stop codons by phosphorylating UPF1/RENT1. Recruited by release factors to stalled ribosomes together with SMG8 and SMG9 (forming the SMG1C protein kinase complex), and UPF1 to form the transient SURF (SMG1-UPF1-eRF1-eRF3) complex. In EJC-dependent NMD, the SURF complex associates with the exon junction complex (EJC) through UPF2 and allows the formation of an UPF1-UPF2-UPF3 surveillance complex which is believed to activate NMD. Also acts as a genotoxic stress-activated protein kinase that displays some functional overlap with ATM. Can phosphorylate p53/TP53 and is required for optimal p53/TP53 activation after cellular exposure to genotoxic stress. Its depletion leads to spontaneous DNA damage and increased sensitivity to ionizing radiation (IR). May activate PRKCI but not PRKCZ. In Mus musculus (Mouse), this protein is Serine/threonine-protein kinase SMG1.